Reading from the N-terminus, the 273-residue chain is Cyclic di-AMP synthase CdaA (273 aa).

Transmembrane regions (helical) follow at residues 12–32 (LGNA…IMVI), 40–60 (LLKG…LGLS), and 61–81 (TLQW…IIIF). Residues 82–242 (QPELRRALEQ…NGDLHRELTE (161 aa)) form the DAC domain.

The protein belongs to the adenylate cyclase family. DacA/CdaA subfamily. In terms of assembly, probably a homodimer. Interacts with CdaR. May interact with GlmM.

Its subcellular location is the cell membrane. The enzyme catalyses 2 ATP = 3',3'-c-di-AMP + 2 diphosphate. With respect to regulation, DAC activity is stimulated about 20-fold in E.coli by coexpression with CdaR. Functionally, one of 3 paralogous diadenylate cyclases (DAC) in this bacteria, catalyzing the condensation of 2 ATP molecules into cyclic di-AMP (c-di-AMP). Upon expression in E.coli leads to c-di-AMP synthesis. Probably the main producer of c-di-AMP for the cell; is probably implicated in control of peptidoglycan synthesis. In B.subtilis c-di-AMP is a second messenger that mediates growth, DNA repair and cell wall homeostasis; it is toxic when present in excess. The chain is Cyclic di-AMP synthase CdaA from Bacillus subtilis (strain 168).